The following is a 490-amino-acid chain: MRIAILGRPNVGKSSIFNRLCKRSLAIVNAQEGTTRDRLYGEIRAWDSIVHVIDTGGVDQESTDRFQKQIHKQALAAAEEASVLLLVVDIRCGITKQDEELAKRLLPLKKPLILVMNKADSQQDLQRIHEFYGLGISNMIATSASHDKHIDVLLERIRQVAEIPLPSAEEQENTQEEEFSSKESSVALHTFADETLFENESLSQEEASFLEELVAQTTTPSISNRPLKVALIGHPNVGKSSIVNALLKEERCITDNSPGTTRDNVDVSYTYNDKEYVFIDTAGLRKAKSIKNSVEWMSSSRTEKAISRADICLLVIDATQQLSYQDKRILSLIARYKKPHVILVNKWDLMFGVRMEHYVQDLRKMDPYIGQARILCISAKQRRNLSQIFSAVDDVYTIATTKLSTSLVNKVLAGAMQRHHPQVINGKRLRIYYAIHKTVTPFSFLLFINSNTLLTKPYELYLKNTLKAAFNLYGIPFDLEYKAKPARKSN.

One can recognise an EngA-type G 1 domain in the interval 1–165 (MRIAILGRPN…RIRQVAEIPL (165 aa)). GTP contacts are provided by residues 7–14 (GRPNVGKS), 54–58 (DTGGV), and 117–120 (NKAD). Positions 165 to 184 (LPSAEEQENTQEEEFSSKES) are disordered. A compositionally biased stretch (acidic residues) spans 169–178 (EEQENTQEEE). The EngA-type G 2 domain maps to 227–400 (LKVALIGHPN…AVDDVYTIAT (174 aa)). GTP-binding positions include 233–240 (GHPNVGKS), 280–284 (DTAGL), and 345–348 (NKWD). The 85-residue stretch at 401–485 (TKLSTSLVNK…PFDLEYKAKP (85 aa)) folds into the KH-like domain.

This sequence belongs to the TRAFAC class TrmE-Era-EngA-EngB-Septin-like GTPase superfamily. EngA (Der) GTPase family. In terms of assembly, associates with the 50S ribosomal subunit.

Functionally, GTPase that plays an essential role in the late steps of ribosome biogenesis. This is GTPase Der from Chlamydia muridarum (strain MoPn / Nigg).